Reading from the N-terminus, the 178-residue chain is Small ribosomal subunit protein uS7c (178 aa).

Over residues 137 to 146 (QKKEEIEKSK) the composition is skewed to basic and acidic residues. Residues 137 to 178 (QKKEEIEKSKSPVNNNKKFISKNKKSKNKKQKKRLKRKKNIY) are disordered. Positions 155 to 178 (FISKNKKSKNKKQKKRLKRKKNIY) are enriched in basic residues.

This sequence belongs to the universal ribosomal protein uS7 family. Part of the 30S ribosomal subunit.

The protein resides in the plastid. One of the primary rRNA binding proteins, it binds directly to 16S rRNA where it nucleates assembly of the head domain of the 30S subunit. The sequence is that of Small ribosomal subunit protein uS7c (rps7) from Euglena longa (Euglenophycean alga).